A 524-amino-acid chain; its full sequence is Apoptosis inhibitor 5 (524 aa).

The ARM-like and Heat-like helical repeats stretch occupies residues 2–360 (PTVEELYRNY…HQLGRKLPDF (359 aa)). Lysine 251 is subject to N6-acetyllysine. Positions 370 to 391 (LKDFKIRLQYFARGLQVYIRQL) are leucine-zipper. Threonine 399 is modified (phosphothreonine). A disordered region spans residues 452-524 (GQKRASEDTT…RGNRSRGRLY (73 aa)). The Nuclear localization signal signature appears at 454–475 (KRASEDTTSGSPPKKSSAGPKR). A phosphoserine mark is found at serine 462, serine 464, and serine 469. Low complexity predominate over residues 462-472 (SGSPPKKSSAG). Residues 487 to 497 (KYSSNLGNFNY) show a composition bias toward polar residues. Position 500 is an omega-N-methylarginine (arginine 500).

Belongs to the API5 family. In terms of assembly, monomer. Interacts with FGF2 and ACIN1. Post-translationally, acetylation at Lys-251 impairs antiapoptotic function. In terms of tissue distribution, expressed in all tissues tested, including heart, brain, placenta, lung, liver, skeletal muscle, kidney and pancreas. Highest levels in heart, pancreas and placenta. Highly expressed in several cancers. Preferentially expressed in squamous cell carcinoma versus adenocarcinoma in non-small cell lung cancer.

The protein localises to the nucleus. It localises to the cytoplasm. Functionally, antiapoptotic factor that may have a role in protein assembly. Negatively regulates ACIN1. By binding to ACIN1, it suppresses ACIN1 cleavage from CASP3 and ACIN1-mediated DNA fragmentation. Also known to efficiently suppress E2F1-induced apoptosis. Its depletion enhances the cytotoxic action of the chemotherapeutic drugs. The polypeptide is Apoptosis inhibitor 5 (Homo sapiens (Human)).